The following is a 296-amino-acid chain: Nucleotide-binding protein SZO_12220 (296 aa).

13-20 is a binding site for ATP; sequence GMSGAGKT. 63-66 contributes to the GTP binding site; it reads DMRS.

The protein belongs to the RapZ-like family.

Its function is as follows. Displays ATPase and GTPase activities. The sequence is that of Nucleotide-binding protein SZO_12220 from Streptococcus equi subsp. zooepidemicus (strain H70).